Reading from the N-terminus, the 297-residue chain is Protein LRATD1 (297 aa).

At Ser38 the chain carries Phosphoserine. The 96-residue stretch at 138 to 233 (PAPEPPAPAP…CRFGKREFKA (96 aa)) folds into the LRAT domain.

Belongs to the LRATD family.

It is found in the cytoplasm. Its function is as follows. May play a role in cell morphology and motility. The sequence is that of Protein LRATD1 (LRATD1) from Bos taurus (Bovine).